The chain runs to 314 residues: Olfactory receptor 10T2 (314 aa).

The Extracellular portion of the chain corresponds to 1–26 (MRGFNKTTVVTQFILVGFSSLGELQL). The N-linked (GlcNAc...) asparagine glycan is linked to N5. The chain crosses the membrane as a helical span at residues 27–47 (LLFVIFLLLYLTILVANVTIM). The Cytoplasmic segment spans residues 48–55 (AVIRFSWT). A helical transmembrane segment spans residues 56–76 (LHTPMYGFLFILSFSESCYTF). Residues 77 to 100 (VIIPQLLVHLLSDTKTISFMACAT) lie on the Extracellular side of the membrane. C98 and C190 are disulfide-bonded. Residues 101-121 (QLFFFLGFACTNCLLIAVMGY) traverse the membrane as a helical segment. At 122–140 (DRYVAICHPLRYTLIINKR) the chain is on the cytoplasmic side. The chain crosses the membrane as a helical span at residues 141 to 161 (LGLELISLSGATGFFIALVAT). Topologically, residues 162–198 (NLICDMRFCGPNRVNHYFCDMAPVIKLACTDTHVKEL) are extracellular. A helical transmembrane segment spans residues 199 to 218 (ALFSLSILVIMVPFLLILIS). The Cytoplasmic segment spans residues 219 to 237 (YGFIVNTILKIPSAEGKKA). Residues 238 to 258 (FVTCASHLTVVFVHYGCASII) form a helical membrane-spanning segment. The Extracellular portion of the chain corresponds to 259-271 (YLRPKSKSASDKD). A helical transmembrane segment spans residues 272-292 (QLVAVTYTVVTPLLNPLVYSL). Residues 293–314 (RNKEVKTALKRVLGMPVATKMS) are Cytoplasmic-facing.

This sequence belongs to the G-protein coupled receptor 1 family.

The protein resides in the cell membrane. Odorant receptor. This is Olfactory receptor 10T2 (OR10T2) from Homo sapiens (Human).